The chain runs to 916 residues: Isoleucine--tRNA ligase (916 aa).

The short motif at 57–67 is the 'HIGH' region element; the sequence is PYANGNLHMGH. Glu554 serves as a coordination point for L-isoleucyl-5'-AMP. Residues 595 to 599 carry the 'KMSKS' region motif; it reads KMSKS. Lys598 lines the ATP pocket. Residues Cys885, Cys888, Cys905, and Cys908 each contribute to the Zn(2+) site.

The protein belongs to the class-I aminoacyl-tRNA synthetase family. IleS type 1 subfamily. Monomer. Requires Zn(2+) as cofactor.

The protein localises to the cytoplasm. It catalyses the reaction tRNA(Ile) + L-isoleucine + ATP = L-isoleucyl-tRNA(Ile) + AMP + diphosphate. In terms of biological role, catalyzes the attachment of isoleucine to tRNA(Ile). As IleRS can inadvertently accommodate and process structurally similar amino acids such as valine, to avoid such errors it has two additional distinct tRNA(Ile)-dependent editing activities. One activity is designated as 'pretransfer' editing and involves the hydrolysis of activated Val-AMP. The other activity is designated 'posttransfer' editing and involves deacylation of mischarged Val-tRNA(Ile). This Staphylococcus saprophyticus subsp. saprophyticus (strain ATCC 15305 / DSM 20229 / NCIMB 8711 / NCTC 7292 / S-41) protein is Isoleucine--tRNA ligase.